The primary structure comprises 495 residues: Solute carrier family 2, facilitated glucose transporter member 3 (495 aa).

The Cytoplasmic portion of the chain corresponds to 1–10 (MGTQKVTVSL). The chain crosses the membrane as a helical span at residues 11 to 32 (IFALSIATIGSFQFGYNTGVIN). Topologically, residues 33–64 (APETIIKDFLNYTLEEKSENLPTEVLLTSLWS) are extracellular. N-linked (GlcNAc...) asparagine glycosylation occurs at N43. The chain crosses the membrane as a helical span at residues 65–85 (LSVAIFSVGGMIGSFSVGLFV). The Cytoplasmic portion of the chain corresponds to 86-90 (NRFGR). The helical transmembrane segment at 91-111 (RNSMLMVNLLAVAGGCLMGFC) threads the bilayer. At 112–118 (KIAQSVE) the chain is on the extracellular side. A helical membrane pass occupies residues 119 to 142 (MLILGRLIIGLFCGLCTGFVPMYI). The Cytoplasmic portion of the chain corresponds to 143-153 (GEISPTALRGA). Residues 154 to 174 (FGTLNQLGIVIGILVAQIFGL) traverse the membrane as a helical segment. Q159 lines the D-glucose pocket. At 175–183 (KVIMGTEEL) the chain is on the extracellular side. Residues 184–204 (WPLLLGFTIIPAVLQSAALPF) traverse the membrane as a helical segment. Topologically, residues 205 to 269 (CPESPRFLLI…LFRSRSYRQP (65 aa)) are cytoplasmic. T232 carries the phosphothreonine modification. Residues 270 to 290 (IIISIMLQLSQQLSGINAVFY) form a helical membrane-spanning segment. Residues 277–279 (QLS) are important for selectivity against fructose. D-glucose-binding positions include 280–281 (QQ) and N286. The Extracellular portion of the chain corresponds to 291-304 (YSTGIFKDAGVEEP). The helical transmembrane segment at 305–325 (IYATIGAGVVNTIFTVVSLFL) threads the bilayer. N315 is a D-glucose binding site. Topologically, residues 326 to 331 (VERAGR) are cytoplasmic. A helical membrane pass occupies residues 332 to 352 (RTLHMIGLGGMAVCSILMTIS). The Extracellular segment spans residues 353-363 (LLLKDNYNWMS). The chain crosses the membrane as a helical span at residues 364 to 389 (FVCIGAILVFVAFFEIGPGPIPWFIV). The D-glucose site is built by E378 and W386. Over 390 to 399 (AELFSQGPRP) the chain is Cytoplasmic. Residues 400-420 (AAMAVAGCSNWTSNFLVGLLF) traverse the membrane as a helical segment. Residues 421–429 (PSAAFYLGA) are Extracellular-facing. The helical transmembrane segment at 430 to 450 (YVFIIFTGFLIVFLVFTFFKV) threads the bilayer. Over 451–495 (PETRGRTFEEITRAFEGQGQDANRAEKGPIVEMNSMQPVKETATV) the chain is Cytoplasmic. S485 is modified (phosphoserine). T492 carries the post-translational modification Phosphothreonine.

It belongs to the major facilitator superfamily. Sugar transporter (TC 2.A.1.1) family. Glucose transporter subfamily. Interacts with SMIM43; the interaction may promote SLC2A3-mediated glucose transport to meet the energy needs of mesendoderm differentiation.

The protein resides in the cell membrane. It is found in the perikaryon. The protein localises to the cell projection. It catalyses the reaction D-glucose(out) = D-glucose(in). The enzyme catalyses D-galactose(in) = D-galactose(out). With respect to regulation, deoxyglucose transport is inhibited by D-glucose, D-galactose and maltose. Galactose transport is inhibited by D-glucose and maltose. In terms of biological role, facilitative glucose transporter. Can also mediate the uptake of various other monosaccharides across the cell membrane. Mediates the uptake of glucose, 2-deoxyglucose, galactose, mannose, xylose and fucose, and probably also dehydroascorbate. Does not mediate fructose transport. Required for mesendoderm differentiation. This is Solute carrier family 2, facilitated glucose transporter member 3 from Canis lupus familiaris (Dog).